Here is a 788-residue protein sequence, read N- to C-terminus: IQ motif and ubiquitin-like domain-containing protein (788 aa).

Positions M1–D89 are disordered. A compositionally biased stretch (basic and acidic residues) spans E7–G20. Residues E31–E54 are compositionally biased toward acidic residues. Residues K68–V78 are compositionally biased toward basic and acidic residues. The span at S80–D89 shows a compositional bias: polar residues. Residues A127–P203 enclose the Ubiquitin-like domain. The IQ domain occupies R334–L363.

Component of the axonemal radial spoke 1 (RS1) complex, at least composed of spoke head proteins RSPH1, RSPH3B, RSPH9 and the cilia-specific component RSPH4A or sperm-specific component RSPH6A, spoke stalk proteins RSPH14, DNAJB13, DYDC1, ROPN1L and NME5, and the anchor protein IQUB. Does not appear to be part of radial spoke complexes 2 or 3 (RS2 or RS3). Interacts with CALM1. Interacts with DNAJB13. Interacts with DYNLL2. Interacts with NME5. Interacts with RSPH3. Interacts with RSPH9. Interacts with ZMYND10. Interacts with calmodulin; the interaction occurs in conditions of low but not high calcium. Expressed in the flagellum of sperm cells and cilia of tracheal epithelial cells (at protein level). High expression in testis, also present in brain and lung.

Its subcellular location is the cytoplasm. It is found in the cytoskeleton. It localises to the flagellum axoneme. The protein resides in the cell projection. The protein localises to the cilium. Anchors the radial spoke 1 (RS1) complex to the A microtubule of outer doublet microtubules in axonemes. The triple radial spokes (RS1, RS2 and RS3) are required to modulate beating of the sperm flagellum. May play a role in inhibiting signaling via MAPK1/ERK2 and MAPK3/ERK1. Additionally, may play a role in the functioning of cilia. Not required for the functioning of tracheal or ependymal cilia. This is IQ motif and ubiquitin-like domain-containing protein (Iqub) from Mus musculus (Mouse).